A 152-amino-acid chain; its full sequence is ALK and LTK ligand 2 (152 aa).

Residues 1–24 (MRGPGHPLLLGLLLVLGAAGRGRG) form the signal peptide. 2 disulfide bridges follow: Cys-111–Cys-147 and Cys-125–Cys-134.

It belongs to the ALKAL family. Homodimer; interchain disulfide bond is not required for homodimerization. As to expression, widely expressed with highest levels in adrenal gland and modest levels in pancreas, testis and uterus.

It is found in the secreted. The protein localises to the cell membrane. Cytokine that acts as a physiological ligand for receptor tyrosine kinases LTK and ALK, leading to their activation. Cytokine-binding is sufficient to activate LTK. In contrast, ALKAL2-driven activation of ALK is coupled with heparin-binding to ALK. Stimulation of ALK signaling is involved in neural development and regulation of energy expenditure. This is ALK and LTK ligand 2 from Homo sapiens (Human).